The primary structure comprises 337 residues: Protein-arginine kinase (337 aa).

In terms of domain architecture, Phosphagen kinase C-terminal spans 12–240 (IVIASKVKIL…NKLILREKNQ (229 aa)). ATP-binding positions include 15–19 (ASKVK), 162–166 (RTKVF), and 193–198 (KSIYNS).

This sequence belongs to the ATP:guanido phosphotransferase family.

It catalyses the reaction L-arginyl-[protein] + ATP = N(omega)-phospho-L-arginyl-[protein] + ADP + H(+). In terms of biological role, catalyzes the specific phosphorylation of arginine residues in proteins. This Clostridium perfringens (strain 13 / Type A) protein is Protein-arginine kinase.